The following is a 194-amino-acid chain: Glycerol-3-phosphate acyltransferase (194 aa).

The next 6 helical transmembrane spans lie at 3-23 (AGLFWIAGAYLLGSIPTGLLL), 52-72 (VGILTLTGDCLKGLLPVLLAW), 80-100 (MQAWVGLAAFCGHVFSVFLLF), 112-132 (VFLALAPLAVLGALAVFILLV), 135-155 (WRYISLGSIMAAAVMPLIIFF), and 162-182 (LLIATVLIAAVVIIKHHSNIS).

Belongs to the PlsY family. In terms of assembly, probably interacts with PlsX.

It is found in the cell inner membrane. The catalysed reaction is an acyl phosphate + sn-glycerol 3-phosphate = a 1-acyl-sn-glycero-3-phosphate + phosphate. Its pathway is lipid metabolism; phospholipid metabolism. In terms of biological role, catalyzes the transfer of an acyl group from acyl-phosphate (acyl-PO(4)) to glycerol-3-phosphate (G3P) to form lysophosphatidic acid (LPA). This enzyme utilizes acyl-phosphate as fatty acyl donor, but not acyl-CoA or acyl-ACP. The chain is Glycerol-3-phosphate acyltransferase from Trichlorobacter lovleyi (strain ATCC BAA-1151 / DSM 17278 / SZ) (Geobacter lovleyi).